The following is a 194-amino-acid chain: Cathelicidin-related peptide isoform 3 (194 aa).

An N-terminal signal peptide occupies residues 1–22; the sequence is MQGFFWKTWLVLAVCGTPASLA. A propeptide spanning residues 23–164 is cleaved from the precursor; that stretch reads HRPLSYGEAL…DQPKRVKRFK (142 aa). Intrachain disulfides connect C79–C90 and C101–C118. The span at 125-145 shows a compositional bias: acidic residues; the sequence is EEEEEEEEEEQKAEAENDEEV. The disordered stretch occupies residues 125–156; that stretch reads EEEEEEEEEEQKAEAENDEEVEKEKGDEEKDQ. Positions 146-156 are enriched in basic and acidic residues; the sequence is EKEKGDEEKDQ.

This sequence belongs to the cathelicidin family. Expressed by the venom gland.

The protein resides in the secreted. The protein localises to the target cell membrane. In terms of biological role, potent antimicrobial peptide against Gram-negative and Gram-positive bacteria. Adopts an amphipathic alpha helical conformation, that may allow to partition into the target membrane. Low hemolytic activities have been observed on mammalian cells. This is Cathelicidin-related peptide isoform 3 from Crotalus durissus cascavella (Northeastern Brazilian rattlesnake).